A 427-amino-acid chain; its full sequence is Serine--tRNA ligase (427 aa).

Residue threonine 231–glutamate 233 coordinates L-serine. Residue arginine 262–glutamate 264 participates in ATP binding. Residue glutamate 285 participates in L-serine binding. Glutamate 349–serine 352 contributes to the ATP binding site. Serine 385 serves as a coordination point for L-serine.

This sequence belongs to the class-II aminoacyl-tRNA synthetase family. Type-1 seryl-tRNA synthetase subfamily. Homodimer. The tRNA molecule binds across the dimer.

It is found in the cytoplasm. The enzyme catalyses tRNA(Ser) + L-serine + ATP = L-seryl-tRNA(Ser) + AMP + diphosphate + H(+). The catalysed reaction is tRNA(Sec) + L-serine + ATP = L-seryl-tRNA(Sec) + AMP + diphosphate + H(+). It functions in the pathway aminoacyl-tRNA biosynthesis; selenocysteinyl-tRNA(Sec) biosynthesis; L-seryl-tRNA(Sec) from L-serine and tRNA(Sec): step 1/1. Functionally, catalyzes the attachment of serine to tRNA(Ser). Is also able to aminoacylate tRNA(Sec) with serine, to form the misacylated tRNA L-seryl-tRNA(Sec), which will be further converted into selenocysteinyl-tRNA(Sec). This chain is Serine--tRNA ligase, found in Rhizobium johnstonii (strain DSM 114642 / LMG 32736 / 3841) (Rhizobium leguminosarum bv. viciae).